The primary structure comprises 521 residues: Cytochrome P450 1A1 (521 aa).

F229 contacts substrate. Residue C463 coordinates heme.

It belongs to the cytochrome P450 family. Heme serves as cofactor.

It localises to the endoplasmic reticulum membrane. The protein resides in the microsome membrane. The enzyme catalyses an organic molecule + reduced [NADPH--hemoprotein reductase] + O2 = an alcohol + oxidized [NADPH--hemoprotein reductase] + H2O + H(+). Its function is as follows. Cytochromes P450 are a group of heme-thiolate monooxygenases. They oxidize a variety of structurally unrelated compounds, including steroids, fatty acids, and xenobiotics. This is Cytochrome P450 1A1 (cyp1a1) from Sparus aurata (Gilthead sea bream).